The following is a 249-amino-acid chain: uncharacterized protein (249 aa).

This is an uncharacterized protein from Escherichia coli O6:H1 (strain CFT073 / ATCC 700928 / UPEC).